Consider the following 401-residue polypeptide: 4-hydroxy-3-methylbut-2-enyl diphosphate reductase (401 aa).

Residue Cys66 coordinates [4Fe-4S] cluster. His96 lines the (2E)-4-hydroxy-3-methylbut-2-enyl diphosphate pocket. Residue His96 participates in dimethylallyl diphosphate binding. Residue His96 participates in isopentenyl diphosphate binding. [4Fe-4S] cluster is bound at residue Cys157. (2E)-4-hydroxy-3-methylbut-2-enyl diphosphate is bound at residue His185. His185 is a binding site for dimethylallyl diphosphate. His185 is an isopentenyl diphosphate binding site. Glu187 serves as the catalytic Proton donor. A (2E)-4-hydroxy-3-methylbut-2-enyl diphosphate-binding site is contributed by Thr250. Position 288 (Cys288) interacts with [4Fe-4S] cluster. (2E)-4-hydroxy-3-methylbut-2-enyl diphosphate is bound by residues Ser317, Ser318, Asn319, and Ser381. 4 residues coordinate dimethylallyl diphosphate: Ser317, Ser318, Asn319, and Ser381. The isopentenyl diphosphate site is built by Ser317, Ser318, Asn319, and Ser381.

This sequence belongs to the IspH family. [4Fe-4S] cluster is required as a cofactor.

The enzyme catalyses isopentenyl diphosphate + 2 oxidized [2Fe-2S]-[ferredoxin] + H2O = (2E)-4-hydroxy-3-methylbut-2-enyl diphosphate + 2 reduced [2Fe-2S]-[ferredoxin] + 2 H(+). It carries out the reaction dimethylallyl diphosphate + 2 oxidized [2Fe-2S]-[ferredoxin] + H2O = (2E)-4-hydroxy-3-methylbut-2-enyl diphosphate + 2 reduced [2Fe-2S]-[ferredoxin] + 2 H(+). It functions in the pathway isoprenoid biosynthesis; dimethylallyl diphosphate biosynthesis; dimethylallyl diphosphate from (2E)-4-hydroxy-3-methylbutenyl diphosphate: step 1/1. It participates in isoprenoid biosynthesis; isopentenyl diphosphate biosynthesis via DXP pathway; isopentenyl diphosphate from 1-deoxy-D-xylulose 5-phosphate: step 6/6. Catalyzes the conversion of 1-hydroxy-2-methyl-2-(E)-butenyl 4-diphosphate (HMBPP) into a mixture of isopentenyl diphosphate (IPP) and dimethylallyl diphosphate (DMAPP). Acts in the terminal step of the DOXP/MEP pathway for isoprenoid precursor biosynthesis. The sequence is that of 4-hydroxy-3-methylbut-2-enyl diphosphate reductase from Prochlorococcus marinus (strain NATL1A).